Reading from the N-terminus, the 162-residue chain is V-type proton ATPase subunit c' (162 aa).

Residues 1–11 (MSSNLCPIYSS) are Lumenal-facing. Residues 12–32 (FFGFAGVCASMVFSCLGAGYG) form a helical membrane-spanning segment. The Cytoplasmic segment spans residues 33–54 (TALAGRGIAAVGAFRPEIVMKS). A helical membrane pass occupies residues 55–75 (LIPVVMSGIIGVYGLVMSVLI). Residues 76–93 (AGDMSPDNDYSLFSGFIH) are Lumenal-facing. A helical transmembrane segment spans residues 94-114 (LSAGLAVGLTGVAAGYAIGVV). At 115 to 132 (GDRGVQSFMRQDRIFVSM) the chain is on the cytoplasmic side. Residues 133-153 (VLILIFAEVLGLYGLIVGLIL) traverse the membrane as a helical segment. At 154-162 (QTKTSNVCY) the chain is on the lumenal side.

The protein belongs to the V-ATPase proteolipid subunit family. As to quaternary structure, V-ATPase is a heteromultimeric enzyme composed of a peripheral catalytic V1 complex (components A to H) attached to an integral membrane V0 proton pore complex (components: a, c, c', c'', d, e, f and VOA1). The decameric c-ring forms the proton-conducting pore, and is composed of eight proteolipid subunits c, one subunit c' and one subunit c''.

The protein localises to the vacuole membrane. Its function is as follows. Proton-conducting pore forming subunit of the V0 complex of vacuolar(H+)-ATPase (V-ATPase), a multisubunit enzyme composed of a peripheral complex (V1) that hydrolyzes ATP and a membrane integral complex (V0) that translocates protons. V-ATPase is responsible for acidifying and maintaining the pH of intracellular compartments. This chain is V-type proton ATPase subunit c', found in Schizosaccharomyces pombe (strain 972 / ATCC 24843) (Fission yeast).